The following is a 1151-amino-acid chain: Importin beta (1151 aa).

HEAT repeat units follow at residues 1 to 36 (MDLASFQNLLQQCQTEQDTQKRKEVEDFYFKYKQEE), 37 to 82 (PASY…GNGN), 83 to 132 (PECV…VAQF), 133 to 175 (PEFF…TKIG), 176 to 222 (GKAI…DSVI), 223 to 269 (PNSV…AVLK), 270 to 316 (PMVK…RAKK), 317 to 377 (AISE…KVIF), 378 to 416 (PLIKDFVSYAKANPTVHNCFAVANIFTITAEGLARLVTK), 417 to 453 (EDIVFTIDTLLELSNHPHQRVRYSVLSAIGQLSEDYA), 454 to 495 (PTFQ…HLKK), 496 to 540 (AETY…LKND), 541 to 593 (FADM…AGTL), 594 to 642 (PQLF…PETF), 643 to 704 (PKYM…MRKT), 705 to 756 (PAAF…TVAS), 757 to 811 (PPAV…SYTE), 812 to 880 (TVNK…ALGD), 881 to 932 (LSLD…KYLS), 933 to 978 (PANS…YEGD), 979 to 1027 (PGLA…AQAF), 1028 to 1074 (PTEL…ARND), 1075 to 1120 (PNFM…VLTQ), and 1121 to 1151 (IAGHGTILADTIAKCSEYVQKTYSLYTSVRQ).

It belongs to the importin beta family.

Its subcellular location is the nucleus intermembrane space. The protein localises to the cytoplasm. It is found in the nucleus. Functionally, functions in nuclear protein import as nuclear transport receptor. Involved in encystation process. Constitutive expression enhances cyst production and increases transcription of endogenous genes involved in encystation. Level of mRNA of the transcriptional factor myb1-like protein increases in early stages of the encystation process followed by increased mRNAs of the cyst wall proteins cwp1-3. The polypeptide is Importin beta (Giardia intestinalis (strain ATCC 50803 / WB clone C6) (Giardia lamblia)).